The following is a 505-amino-acid chain: Histidine ammonia-lyase (505 aa).

Residues 141-143 constitute a cross-link (5-imidazolinone (Ala-Gly)); that stretch reads ASG. 2,3-didehydroalanine (Ser) is present on serine 142.

Belongs to the PAL/histidase family. Post-translationally, contains an active site 4-methylidene-imidazol-5-one (MIO), which is formed autocatalytically by cyclization and dehydration of residues Ala-Ser-Gly.

Its subcellular location is the cytoplasm. The enzyme catalyses L-histidine = trans-urocanate + NH4(+). It participates in amino-acid degradation; L-histidine degradation into L-glutamate; N-formimidoyl-L-glutamate from L-histidine: step 1/3. The chain is Histidine ammonia-lyase from Bacillus cereus (strain ZK / E33L).